We begin with the raw amino-acid sequence, 701 residues long: SH3 domain-binding protein 1 (701 aa).

A compositionally biased stretch (basic residues) spans 1 to 10 (MMKRQLHRMR). Disordered stretches follow at residues 1–23 (MMKR…RTPE) and 160–182 (SQAT…HSHT). The segment at 1 to 275 (MMKRQLHRMR…TATHFPRVYG (275 aa)) is interaction with CGNL1. The BAR domain maps to 17-262 (SLGRTPETAE…RENHGQADHS (246 aa)). Residues S175, S241, S262, and S264 each carry the phosphoserine modification. Positions 276–469 (VSLATHLQEL…ALIQSADTLF (194 aa)) constitute a Rho-GAP domain. Residues 470–701 (PGDINFNVSG…RPRSLASETN (232 aa)) are interaction with CD2AP. Residues 496 to 701 (SEELPSTAVP…RPRSLASETN (206 aa)) are disordered. Over residues 508–522 (ATTPAPAPAPAPAPA) the composition is skewed to pro residues. S544 and S550 each carry phosphoserine. Pro residues-rich tracts occupy residues 570–579 (PARPTMPPPQ) and 587–596 (PPAPPLPPGS). Position 601 is a phosphothreonine (T601). Positions 616–625 (APTVPPPLPP) match the SH3-binding motif. Pro residues-rich tracts occupy residues 618–630 (TVPP…PPQP) and 641–652 (SPSPASPGPASP). A Phosphothreonine modification is found at T626. S653 carries the post-translational modification Phosphoserine. A compositionally biased stretch (low complexity) spans 666-677 (GAATAEGGAPEA). The segment covering 682–692 (PTPPAIPPQPR) has biased composition (pro residues).

As to quaternary structure, interacts with RAC1. Interacts with the exocyst via EXOC4 and EXOC8; required for the localization of both SH3BP1 and the exocyst to the leading edge of migrating cells. Interacts with CD2AP and CGNL1; probably part of a complex at cell junctions. Interacts with CAPZA1; recruits CAPZA1 to forming cell junctions. May interact with AFDN. Interacts with PLXND1; they dissociate upon SEMA3E binding to PLXND1 allowing SH3BP1 to transduce downstream signal through RAC1 inactivation. Interacts with ABL1, GRB2 and SRC (via SH3 domain).

The protein localises to the cell projection. It is found in the cell junction. Its subcellular location is the tight junction. It localises to the adherens junction. The protein resides in the phagocytic cup. The protein localises to the nucleus. It is found in the cytoplasm. Its subcellular location is the cytosol. GTPase activating protein (GAP) which specifically converts GTP-bound Rho-type GTPases including RAC1 and CDC42 in their inactive GDP-bound form. By specifically inactivating RAC1 at the leading edge of migrating cells, it regulates the spatiotemporal organization of cell protrusions which is important for proper cell migration. Also negatively regulates CDC42 in the process of actin remodeling and the formation of epithelial cell junctions. Through its GAP activity toward RAC1 and/or CDC42 plays a specific role in phagocytosis of large particles. Specifically recruited by a PI3 kinase/PI3K-dependent mechanism to sites of large particles engagement, inactivates RAC1 and/or CDC42 allowing the reorganization of the underlying actin cytoskeleton required for engulfment. It also plays a role in angiogenesis and the process of repulsive guidance as part of a semaphorin-plexin signaling pathway. Following the binding of PLXND1 to extracellular SEMA3E it dissociates from PLXND1 and inactivates RAC1, inducing the intracellular reorganization of the actin cytoskeleton and the collapse of cells. The polypeptide is SH3 domain-binding protein 1 (Homo sapiens (Human)).